The primary structure comprises 500 residues: Cobyric acid synthase (500 aa).

A GATase cobBQ-type domain is found at 251-449; sequence KLNIVIPIMP…LHGVFDHPDA (199 aa). Cysteine 332 functions as the Nucleophile in the catalytic mechanism. The active site involves histidine 441.

It belongs to the CobB/CobQ family. CobQ subfamily.

It participates in cofactor biosynthesis; adenosylcobalamin biosynthesis. Catalyzes amidations at positions B, D, E, and G on adenosylcobyrinic A,C-diamide. NH(2) groups are provided by glutamine, and one molecule of ATP is hydrogenolyzed for each amidation. The protein is Cobyric acid synthase of Marinomonas sp. (strain MWYL1).